The sequence spans 98 residues: Small ribosomal subunit protein bS18c (98 aa).

Positions 1-13 (MSKQSFDFKRYKP) are enriched in basic and acidic residues. The disordered stretch occupies residues 1-26 (MSKQSFDFKRYKPEAPSGSRKRPLKK).

Belongs to the bacterial ribosomal protein bS18 family. As to quaternary structure, part of the 30S ribosomal subunit.

The protein localises to the plastid. It localises to the chloroplast. The sequence is that of Small ribosomal subunit protein bS18c from Gnetum parvifolium (Small-leaved jointfir).